Consider the following 158-residue polypeptide: Egg cell-secreted protein 1.1 (158 aa).

The N-terminal stretch at 1–27 is a signal peptide; that stretch reads MASKSSFMATFNIVTLMLMVASSTVTA. The N-linked (GlcNAc...) asparagine glycan is linked to Asn-122.

It belongs to the plant egg cell-secreted peptide family. In terms of tissue distribution, restricted to female reproductive tissues, specifically accumulating in storage vesicles of the unfertilized egg cell.

The protein resides in the cytoplasmic vesicle. Its subcellular location is the secreted. Involved in the regulation of gamete interactions during the double fertilization and to prevent multiple-pollen tube attraction; mediates the redistribution of the gamete fusogen HAP2/GCS1 to the cell surface after secretion upon sperm arrival. This chain is Egg cell-secreted protein 1.1 (EC1.1), found in Arabidopsis thaliana (Mouse-ear cress).